The sequence spans 71 residues: Large ribosomal subunit protein bL31 (71 aa).

It belongs to the bacterial ribosomal protein bL31 family. Type A subfamily. Part of the 50S ribosomal subunit.

Its function is as follows. Binds the 23S rRNA. In Metamycoplasma arthritidis (strain 158L3-1) (Mycoplasma arthritidis), this protein is Large ribosomal subunit protein bL31.